The sequence spans 321 residues: Solute carrier family 25 member 33 (321 aa).

Solcar repeat units follow at residues E9–Q118, N126–Y213, and T231–L315. 6 helical membrane-spanning segments follow: residues L12 to L32, V49 to V65, G121 to V141, L190 to L210, F233 to P253, and Q298 to D318.

The protein belongs to the mitochondrial carrier (TC 2.A.29) family.

Its subcellular location is the mitochondrion inner membrane. It carries out the reaction UTP(in) + UDP(out) = UTP(out) + UDP(in). The enzyme catalyses dUTP(out) + UTP(in) = dUTP(in) + UTP(out). The catalysed reaction is 5-methyl-UTP(out) + UTP(in) = 5-methyl-UTP(in) + UTP(out). It catalyses the reaction 5-methyl-UDP(out) + UTP(in) = 5-methyl-UDP(in) + UTP(out). It carries out the reaction UTP(in) + CTP(out) = UTP(out) + CTP(in). The enzyme catalyses CDP(out) + UTP(in) = CDP(in) + UTP(out). The catalysed reaction is dCTP(out) + UTP(in) = dCTP(in) + UTP(out). It catalyses the reaction dCDP(out) + UTP(in) = dCDP(in) + UTP(out). It carries out the reaction UTP(in) + GTP(out) = UTP(out) + GTP(in). The enzyme catalyses UTP(in) + GDP(out) = UTP(out) + GDP(in). The catalysed reaction is dGTP(out) + UTP(in) = dGTP(in) + UTP(out). It catalyses the reaction dGDP(out) + UTP(in) = dGDP(in) + UTP(out). It carries out the reaction ITP(out) + UTP(in) = ITP(in) + UTP(out). Functionally, mitochondrial transporter that imports/exports pyrimidine nucleotides into and from mitochondria. Selectively transports uridine, thymidine, guanosine, cytosine and inosine (deoxy)nucleoside di- and triphosphates by an antiport mechanism. May import (deoxy)nucleoside triphosphates in exchange for intramitochondrial (deoxy)nucleoside diphosphates, thus providing precursors necessary for de novo synthesis of mitochondrial DNA and RNA while exporting products of their catabolism. Participates in mitochondrial genome maintenance, regulation of mitochondrial membrane potential and mitochondrial respiration. Upon INS or IGF1 stimulation regulates cell growth and proliferation by controlling mitochondrial DNA replication and transcription, the ratio of mitochondria-to nuclear-encoded components of the electron transport chain resulting in control of mitochondrial ROS production. Participates in dendritic cell endocytosis and may associate with mitochondrial oxidative phosphorylation. The sequence is that of Solute carrier family 25 member 33 (SLC25A33) from Bos taurus (Bovine).